The following is a 524-amino-acid chain: GMP synthase [glutamine-hydrolyzing] (524 aa).

The 190-residue stretch at 10-199 (PVLVVDFGAQ…LTEVAGLEQT (190 aa)) folds into the Glutamine amidotransferase type-1 domain. Cysteine 87 serves as the catalytic Nucleophile. Residues histidine 173 and glutamate 175 contribute to the active site. Positions 200–398 (WTSANIAQQL…LGLPEEIVAR (199 aa)) constitute a GMPS ATP-PPase domain. 228 to 234 (SGGVDSA) lines the ATP pocket.

Homodimer.

It catalyses the reaction XMP + L-glutamine + ATP + H2O = GMP + L-glutamate + AMP + diphosphate + 2 H(+). It participates in purine metabolism; GMP biosynthesis; GMP from XMP (L-Gln route): step 1/1. Catalyzes the synthesis of GMP from XMP. The protein is GMP synthase [glutamine-hydrolyzing] (guaA) of Corynebacterium ammoniagenes (Brevibacterium ammoniagenes).